The chain runs to 192 residues: Xanthine phosphoribosyltransferase 2 (192 aa).

Xanthine is bound by residues leucine 20 and asparagine 27. 131-135 (ANACA) serves as a coordination point for 5-phospho-alpha-D-ribose 1-diphosphate. Lysine 159 provides a ligand contact to xanthine.

It belongs to the purine/pyrimidine phosphoribosyltransferase family. Xpt subfamily. In terms of assembly, homodimer.

It is found in the cytoplasm. The catalysed reaction is XMP + diphosphate = xanthine + 5-phospho-alpha-D-ribose 1-diphosphate. The protein operates within purine metabolism; XMP biosynthesis via salvage pathway; XMP from xanthine: step 1/1. Its function is as follows. Converts the preformed base xanthine, a product of nucleic acid breakdown, to xanthosine 5'-monophosphate (XMP), so it can be reused for RNA or DNA synthesis. The sequence is that of Xanthine phosphoribosyltransferase 2 from Clostridium perfringens (strain ATCC 13124 / DSM 756 / JCM 1290 / NCIMB 6125 / NCTC 8237 / Type A).